The sequence spans 90 residues: MTKKELIDRVAKKAGAKKKDVKLILDTILETITEALAKGEKVQIVGFGSFEVRKAAARKGVNPQTRKPITIPERKVPKFKPGKALKEKVK.

Positions Ala57–Lys90 are disordered.

It belongs to the bacterial histone-like protein family.

Its function is as follows. Histone-like DNA-binding protein which is capable of wrapping DNA to stabilize it, and thus to prevent its denaturation under extreme environmental conditions. The sequence is that of DNA-binding protein HU (hup) from Thermotoga maritima (strain ATCC 43589 / DSM 3109 / JCM 10099 / NBRC 100826 / MSB8).